We begin with the raw amino-acid sequence, 1317 residues long: uncharacterized protein (1317 aa).

The protein belongs to the oxoprolinase family.

This is an uncharacterized protein from Schizosaccharomyces pombe (strain 972 / ATCC 24843) (Fission yeast).